Reading from the N-terminus, the 314-residue chain is Ribonuclease Z (314 aa).

Zn(2+) contacts are provided by histidine 60, histidine 62, aspartate 64, histidine 65, histidine 140, aspartate 209, and histidine 269. The active-site Proton acceptor is aspartate 64.

This sequence belongs to the RNase Z family. Homodimer. It depends on Zn(2+) as a cofactor.

It carries out the reaction Endonucleolytic cleavage of RNA, removing extra 3' nucleotides from tRNA precursor, generating 3' termini of tRNAs. A 3'-hydroxy group is left at the tRNA terminus and a 5'-phosphoryl group is left at the trailer molecule.. Zinc phosphodiesterase, which displays some tRNA 3'-processing endonuclease activity. Probably involved in tRNA maturation, by removing a 3'-trailer from precursor tRNA. The chain is Ribonuclease Z from Methanococcus maripaludis (strain C5 / ATCC BAA-1333).